Reading from the N-terminus, the 698-residue chain is uncharacterized protein (698 aa).

The signal sequence occupies residues 1 to 17 (MKKRHLLSLLALGISTA). Cys-18 carries N-palmitoyl cysteine lipidation. Cys-18 is lipidated: S-diacylglycerol cysteine.

This sequence to E.coli YmcA.

It localises to the cell membrane. This is an uncharacterized protein from Escherichia coli (strain K12).